We begin with the raw amino-acid sequence, 786 residues long: UPF0313 protein SO_0311 (786 aa).

Residues 371-649 form the Radical SAM core domain; the sequence is AYDMIKTSIN…KALLRYHDPA (279 aa). Positions 385, 389, and 392 each coordinate [4Fe-4S] cluster. Disordered regions lie at residues 669-688 and 698-786; these read NSPN…PKWM and LTRF…QQAK. Composition is skewed to basic and acidic residues over residues 679-688 and 706-717; these read GRNERGPKWM and FDERKGKGDAKG. Over residues 718 to 731 the composition is skewed to low complexity; that stretch reads KPSASKPKGPKSGA. Residues 732-741 show a composition bias toward polar residues; the sequence is NAPQSQQPKT.

Belongs to the UPF0313 family. Requires [4Fe-4S] cluster as cofactor.

The protein is UPF0313 protein SO_0311 of Shewanella oneidensis (strain ATCC 700550 / JCM 31522 / CIP 106686 / LMG 19005 / NCIMB 14063 / MR-1).